A 107-amino-acid polypeptide reads, in one-letter code: Nucleoid-associated protein Xfasm12_1216 (107 aa).

It belongs to the YbaB/EbfC family. Homodimer.

It localises to the cytoplasm. Its subcellular location is the nucleoid. Binds to DNA and alters its conformation. May be involved in regulation of gene expression, nucleoid organization and DNA protection. This Xylella fastidiosa (strain M12) protein is Nucleoid-associated protein Xfasm12_1216.